The chain runs to 316 residues: Replication initiation protein (316 aa).

This sequence belongs to the initiator RepB protein family.

The polypeptide is Replication initiation protein (repA) (Escherichia coli).